The following is a 342-amino-acid chain: N-acetyl-gamma-glutamyl-phosphate reductase (342 aa).

Cys146 is a catalytic residue.

It belongs to the NAGSA dehydrogenase family. Type 1 subfamily.

It localises to the cytoplasm. It carries out the reaction N-acetyl-L-glutamate 5-semialdehyde + phosphate + NADP(+) = N-acetyl-L-glutamyl 5-phosphate + NADPH + H(+). It participates in amino-acid biosynthesis; L-arginine biosynthesis; N(2)-acetyl-L-ornithine from L-glutamate: step 3/4. Its function is as follows. Catalyzes the NADPH-dependent reduction of N-acetyl-5-glutamyl phosphate to yield N-acetyl-L-glutamate 5-semialdehyde. The polypeptide is N-acetyl-gamma-glutamyl-phosphate reductase (Streptomyces coelicolor (strain ATCC BAA-471 / A3(2) / M145)).